Here is a 196-residue protein sequence, read N- to C-terminus: dTTP/UTP pyrophosphatase (196 aa).

Asp-72 serves as the catalytic Proton acceptor.

Belongs to the Maf family. YhdE subfamily. A divalent metal cation is required as a cofactor.

It localises to the cytoplasm. The enzyme catalyses dTTP + H2O = dTMP + diphosphate + H(+). It catalyses the reaction UTP + H2O = UMP + diphosphate + H(+). In terms of biological role, nucleoside triphosphate pyrophosphatase that hydrolyzes dTTP and UTP. May have a dual role in cell division arrest and in preventing the incorporation of modified nucleotides into cellular nucleic acids. This Chlamydia trachomatis serovar A (strain ATCC VR-571B / DSM 19440 / HAR-13) protein is dTTP/UTP pyrophosphatase.